We begin with the raw amino-acid sequence, 82 residues long: Small ribosomal subunit protein bS18 (82 aa).

Positions 1 to 20 (MSEINQTVTRRPFHRRRKTC) are disordered.

Belongs to the bacterial ribosomal protein bS18 family. As to quaternary structure, part of the 30S ribosomal subunit. Forms a tight heterodimer with protein bS6.

In terms of biological role, binds as a heterodimer with protein bS6 to the central domain of the 16S rRNA, where it helps stabilize the platform of the 30S subunit. This is Small ribosomal subunit protein bS18 from Bartonella quintana (strain Toulouse) (Rochalimaea quintana).